A 258-amino-acid polypeptide reads, in one-letter code: Casein kinase II subunit beta' (258 aa).

The span at 1-10 (MGSRSENVGT) shows a compositional bias: polar residues. Residues 1–29 (MGSRSENVGTVTREGSRVEQDDVLMDDDS) are disordered.

It belongs to the casein kinase 2 subunit beta family. In terms of assembly, tetramer composed of an alpha subunit, an alpha' subunit, one beta subunit and one beta' subunit. Interacts with FACT subunits POB3 and SPT16. Interaction with YTA7. Phosphorylated by alpha subunit. In terms of processing, the N-terminus is blocked.

Regulatory subunit of casein kinase II/CK2. As part of the kinase complex regulates the basal catalytic activity of the alpha subunit a constitutively active serine/threonine-protein kinase that phosphorylates a large number of substrates containing acidic residues C-terminal to the phosphorylated serine or threonine. This is Casein kinase II subunit beta' from Saccharomyces cerevisiae (strain ATCC 204508 / S288c) (Baker's yeast).